The sequence spans 501 residues: Geissoschizine oxidase (501 aa).

A helical membrane pass occupies residues 1–21; that stretch reads MEFSFSSPALYIVYFLLFFVV. N60 carries an N-linked (GlcNAc...) asparagine glycan. C442 contributes to the heme binding site.

This sequence belongs to the cytochrome P450 family. Requires heme as cofactor. As to expression, expressed in leaf epidermis. Also present in the leaf internal phloem-associated parenchyma (IPAP) inside the mesophyll.

It localises to the membrane. It catalyses the reaction (19E)-geissoschizine + reduced [NADPH--hemoprotein reductase] + O2 = akuammicine + formate + oxidized [NADPH--hemoprotein reductase] + H2O + H(+). The enzyme catalyses (19E)-geissoschizine + reduced [NADPH--hemoprotein reductase] + O2 = 3,17-didehydrostemmadenine + oxidized [NADPH--hemoprotein reductase] + 2 H2O. Its pathway is alkaloid biosynthesis. Functionally, component of the seco-iridoid and derivatives monoterpenoid indole alkaloids (MIAs, e.g. vincristine, quinine, and strychnine) biosynthesis pathway. Catalyzes the oxidation of 19E-geissoschizine to produce a short-lived MIA unstable intermediate which can be spontaneously converted into akuammicine or oxidized by Redox1 and Redox2 to produce stemmadenine and 16S/R-deshydroxymethylstemmadenine (16S/R-DHS). The polypeptide is Geissoschizine oxidase (Catharanthus roseus (Madagascar periwinkle)).